A 546-amino-acid polypeptide reads, in one-letter code: Chaperonin GroEL (546 aa).

Residues 29-32, lysine 50, 86-90, glycine 414, and aspartate 492 each bind ATP; these read TMGP and DGTTT.

This sequence belongs to the chaperonin (HSP60) family. Forms a cylinder of 14 subunits composed of two heptameric rings stacked back-to-back. Interacts with the co-chaperonin GroES.

It localises to the cytoplasm. The enzyme catalyses ATP + H2O + a folded polypeptide = ADP + phosphate + an unfolded polypeptide.. Its function is as follows. Together with its co-chaperonin GroES, plays an essential role in assisting protein folding. The GroEL-GroES system forms a nano-cage that allows encapsulation of the non-native substrate proteins and provides a physical environment optimized to promote and accelerate protein folding. This is Chaperonin GroEL from Helicobacter pylori (strain Shi470).